The following is a 276-amino-acid chain: Aquaporin-1 (276 aa).

Residues 1–10 lie on the Cytoplasmic side of the membrane; it reads MLDAEQKKNY. A helical transmembrane segment spans residues 11–31; that stretch reads VAGAFGEFVGTAYFLFMGVGG. Residues 32–46 are Extracellular-facing; that stretch reads AVNFLNNAAGSPLPG. The chain crosses the membrane as a helical span at residues 47 to 67; it reads FAIPFCFGFSLFVNVFIWAPI. Topologically, residues 68–93 are cytoplasmic; the sequence is SGGVFNPSITIALMATNPKDFPWYRG. The short motif at 73-75 is the NPA 1 element; it reads NPS. The helical transmembrane segment at 94 to 114 threads the bilayer; sequence ILYIVSQFLGALFGSWLIDLI. Over 115 to 133 the chain is Extracellular; sequence QPEAPNAATLLADGVSVAQ. The helical transmembrane segment at 134–154 threads the bilayer; that stretch reads GLFMEMFATSVLTMAVLILAG. Topologically, residues 155 to 159 are cytoplasmic; sequence ERYGK. The helical transmembrane segment at 160 to 180 threads the bilayer; the sequence is YLAPFGIGMSLFISALCAGPY. Residues 181–204 lie on the Extracellular side of the membrane; sequence TGASLNPARTLGPAIVANQYGRAH. The short motif at 186–188 is the NPA 2 element; the sequence is NPA. Residues 205–225 traverse the membrane as a helical segment; it reads WIYYVGPTLGSLLAAGYWHIL. Residues 226–276 are Cytoplasmic-facing; that stretch reads RILNIDVVDLKNVLNKCKKCGKEDPRISLKHCEECLKDDPKPEKYDIESQN.

This sequence belongs to the MIP/aquaporin (TC 1.A.8) family.

The protein resides in the cell membrane. It catalyses the reaction H2O(in) = H2O(out). With respect to regulation, polyethylene glycol (PEG) stimulates whereas glycerol inhibits the aquaporin activity. Water channel required to facilitate the transport of water across membranes. Stimulates plant drought tolerance by facilitating the transport of water from the arbuscular mycorrhiza fungus to host plants. The polypeptide is Aquaporin-1 (Rhizophagus irregularis (Arbuscular mycorrhizal fungus)).